Consider the following 256-residue polypeptide: 5-oxoprolinase subunit A (256 aa).

Belongs to the LamB/PxpA family. In terms of assembly, forms a complex composed of PxpA, PxpB and PxpC.

It catalyses the reaction 5-oxo-L-proline + ATP + 2 H2O = L-glutamate + ADP + phosphate + H(+). Catalyzes the cleavage of 5-oxoproline to form L-glutamate coupled to the hydrolysis of ATP to ADP and inorganic phosphate. This is 5-oxoprolinase subunit A from Alkaliphilus metalliredigens (strain QYMF).